Reading from the N-terminus, the 178-residue chain is Gluconokinase (178 aa).

ATP is bound at residue 19 to 26 (GVSGTGKT).

It belongs to the gluconokinase GntK/GntV family. As to quaternary structure, monomer.

The catalysed reaction is D-gluconate + ATP = 6-phospho-D-gluconate + ADP + H(+). It functions in the pathway carbohydrate acid metabolism; D-gluconate degradation. Activated by magnesium. Its function is as follows. Phosphorylates gluconate to 6-phosphogluconate. The chain is Gluconokinase from Gluconobacter oxydans (strain 621H) (Gluconobacter suboxydans).